The following is a 182-amino-acid chain: Late embryogenesis abundant protein 3 (182 aa).

A disordered region spans residues 1-51 (MAQHQHSPQRPRDQDNTRPHDQYGIVFSVSGDDVARKQGDSFSQPDPTVAT). The short motif at 7–11 (SPQRP) is the Nuclear localization signal (NLS) element. Residues 10–21 (RPRDQDNTRPHD) are compositionally biased toward basic and acidic residues. SMP domains follow at residues 58-115 (VTIG…TNEQ) and 123-181 (VNIA…LNQQ). Residues 145-182 (EDAEAVVGAELRSSSEMKTTPGGVADSMSAGARLNQQL) form a disordered region.

This sequence belongs to the LEA type SMP family.

The protein resides in the cytoplasm. It is found in the nucleus. LEA proteins are late embryonic proteins abundant in higher plant seed embryos. The function of those proteins is not known. The polypeptide is Late embryogenesis abundant protein 3 (Arabidopsis thaliana (Mouse-ear cress)).